The sequence spans 360 residues: MKPSIVAKLEALHERHEEVQALLGDAQTIADQERFRALSREYAQLSDVSRCFTDWQQVQEDIETAQMMLDDPEMREMAQDELRKAKEKSEQLEQQLQVLLLPKDPDDERNAFLEVRAGTGGDEAALFAGDLFRMYSRYAEARRWRVEIMSASEGEHGGYKEIIAKISGDGVYGRLKFESGGHRVQRVPATESQGRIHTSACTVAVMPELPDAELPDINPADLRIDTFRSSGAGGQHVNTTDSAIRITHLPTGIVVECQDERSQHKNKAKALSVLGARIHAAEMAKRQQAEASTRRNLLGSGDRSDRNRTYNFPQGRVTDHRINLTLYRLDEVMEGKLDMLIEPIIQEHQADQLAALSEQE.

At Gln-235 the chain carries N5-methylglutamine. Residues 285–313 form a disordered region; it reads KRQQAEASTRRNLLGSGDRSDRNRTYNFP.

The protein belongs to the prokaryotic/mitochondrial release factor family. Methylated by PrmC. Methylation increases the termination efficiency of RF1.

It is found in the cytoplasm. Functionally, peptide chain release factor 1 directs the termination of translation in response to the peptide chain termination codons UAG and UAA. In Shigella boydii serotype 18 (strain CDC 3083-94 / BS512), this protein is Peptide chain release factor 1.